Here is a 142-residue protein sequence, read N- to C-terminus: Hemoglobin subunit alpha (142 aa).

The region spanning 2–142 is the Globin domain; sequence VLSDADKTHV…VATVLTSKYR (141 aa). Position 4 is a phosphoserine (S4). An N6-succinyllysine modification is found at K8. T9 is subject to Phosphothreonine. An N6-succinyllysine modification is found at K12. The residue at position 17 (K17) is an N6-acetyllysine; alternate. K17 is modified (N6-succinyllysine; alternate). At Y25 the chain carries Phosphotyrosine. At S36 the chain carries Phosphoserine. At K41 the chain carries N6-succinyllysine. The residue at position 50 (S50) is a Phosphoserine. Residue H59 coordinates O2. Residue H88 participates in heme b binding. S103 bears the Phosphoserine mark. T109 is modified (phosphothreonine). 2 positions are modified to phosphoserine: S125 and S132. Phosphothreonine occurs at positions 135 and 138. At S139 the chain carries Phosphoserine.

The protein belongs to the globin family. As to quaternary structure, heterotetramer of two alpha chains and two beta chains. As to expression, red blood cells.

Functionally, involved in oxygen transport from the lung to the various peripheral tissues. In terms of biological role, hemopressin acts as an antagonist peptide of the cannabinoid receptor CNR1. Hemopressin-binding efficiently blocks cannabinoid receptor CNR1 and subsequent signaling. The polypeptide is Hemoglobin subunit alpha (HBA) (Dasyurus viverrinus (Eastern quoll)).